Here is a 263-residue protein sequence, read N- to C-terminus: Phosphatidylglycerol--prolipoprotein diacylglyceryl transferase (263 aa).

The next 4 helical transmembrane spans lie at 10 to 30 (VAIT…LFGF), 56 to 76 (MVTY…ILFY), 91 to 111 (IWNG…AMWL), and 117 to 137 (GLGF…GLFF). Residue R139 participates in a 1,2-diacyl-sn-glycero-3-phospho-(1'-sn-glycerol) binding. 3 helical membrane-spanning segments follow: residues 171–191 (PSQL…LWVF), 199–219 (GHVS…VEFV), and 231–251 (FGWL…GLWL).

It belongs to the Lgt family.

The protein resides in the cell inner membrane. The catalysed reaction is L-cysteinyl-[prolipoprotein] + a 1,2-diacyl-sn-glycero-3-phospho-(1'-sn-glycerol) = an S-1,2-diacyl-sn-glyceryl-L-cysteinyl-[prolipoprotein] + sn-glycerol 1-phosphate + H(+). Its pathway is protein modification; lipoprotein biosynthesis (diacylglyceryl transfer). Functionally, catalyzes the transfer of the diacylglyceryl group from phosphatidylglycerol to the sulfhydryl group of the N-terminal cysteine of a prolipoprotein, the first step in the formation of mature lipoproteins. This Nitratidesulfovibrio vulgaris (strain ATCC 29579 / DSM 644 / CCUG 34227 / NCIMB 8303 / VKM B-1760 / Hildenborough) (Desulfovibrio vulgaris) protein is Phosphatidylglycerol--prolipoprotein diacylglyceryl transferase.